A 323-amino-acid polypeptide reads, in one-letter code: Ficolin-2 (323 aa).

A signal peptide spans 1–26 (MDTRGVAAAMRPLVLLVAFLCTAAPA). The region spanning 52-102 (GLPGAAGPKGEAGASGPKGGQGPPGAPGEPGPPGPKGDRGEKGEPGPKGES) is the Collagen-like domain. Residues 55 to 66 (GAAGPKGEAGAS) show a composition bias toward low complexity. The interval 55-107 (GAAGPKGEAGASGPKGGQGPPGAPGEPGPPGPKGDRGEKGEPGPKGESWETEQ) is disordered. Positions 75-86 (PGAPGEPGPPGP) are enriched in pro residues. Residues 87 to 102 (KGDRGEKGEPGPKGES) are compositionally biased toward basic and acidic residues. Residues 106 to 323 (EQCLTGPRTC…KVSEMKFRAT (218 aa)) form the Fibrinogen C-terminal domain. Cystine bridges form between Cys-108-Cys-136 and Cys-115-Cys-143. N-linked (GlcNAc...) asparagine glycosylation occurs at Asn-249. 3 residues coordinate Ca(2+): Asp-259, Asp-261, and Ser-265. Residues Cys-267 and Cys-280 are joined by a disulfide bond. Asn-302 and Asn-310 each carry an N-linked (GlcNAc...) asparagine glycan.

This sequence belongs to the ficolin lectin family. As to quaternary structure, homotrimer. Interacts with elastin. Interacts with MASP1 and MASP2. Mainly expressed in skeletal muscle.

The protein resides in the secreted. May function in innate immunity through activation of the lectin complement pathway. Calcium-dependent and GlcNAc-binding lectin. In Sus scrofa (Pig), this protein is Ficolin-2 (FCN2).